We begin with the raw amino-acid sequence, 595 residues long: NADH-quinone oxidoreductase subunit C/D (595 aa).

The tract at residues 1–185 is NADH dehydrogenase I subunit C; it reads MTDLTAQAAC…DPFELTKAKQ (185 aa). Positions 209 to 595 are NADH dehydrogenase I subunit D; the sequence is DFMFLNLGPN…IDFVMSDVDR (387 aa).

This sequence in the N-terminal section; belongs to the complex I 30 kDa subunit family. The protein in the C-terminal section; belongs to the complex I 49 kDa subunit family. As to quaternary structure, NDH-1 is composed of 13 different subunits. Subunits NuoB, CD, E, F, and G constitute the peripheral sector of the complex.

It localises to the cell inner membrane. The enzyme catalyses a quinone + NADH + 5 H(+)(in) = a quinol + NAD(+) + 4 H(+)(out). NDH-1 shuttles electrons from NADH, via FMN and iron-sulfur (Fe-S) centers, to quinones in the respiratory chain. The immediate electron acceptor for the enzyme in this species is believed to be ubiquinone. Couples the redox reaction to proton translocation (for every two electrons transferred, four hydrogen ions are translocated across the cytoplasmic membrane), and thus conserves the redox energy in a proton gradient. In Enterobacter sp. (strain 638), this protein is NADH-quinone oxidoreductase subunit C/D.